Reading from the N-terminus, the 150-residue chain is Transcriptional repressor NrdR (150 aa).

The segment at 3–34 (CPFCAFADSKVVDSRPDKGGSTIRRRRECESC) is a zinc-finger region. Residues 49-139 (PLVIKKDGRR…VYRSFKDITE (91 aa)) form the ATP-cone domain.

This sequence belongs to the NrdR family. Zn(2+) serves as cofactor.

Functionally, negatively regulates transcription of bacterial ribonucleotide reductase nrd genes and operons by binding to NrdR-boxes. The chain is Transcriptional repressor NrdR from Geotalea uraniireducens (strain Rf4) (Geobacter uraniireducens).